The sequence spans 391 residues: uncharacterized protein (391 aa).

The 230-residue stretch at 85-314 (ATAAFVGFPS…LKEKIYEKLG (230 aa)) folds into the OBG-type G domain. GTP is bound by residues 91-98 (GFPSVGKS), 137-141 (DAPGI), and 267-270 (NKID). The 76-residue stretch at 314 to 389 (GFIKIYLKPQ…EDGDILTIVI (76 aa)) folds into the TGS domain.

It belongs to the TRAFAC class OBG-HflX-like GTPase superfamily. OBG GTPase family.

This is an uncharacterized protein from Methanocaldococcus jannaschii (strain ATCC 43067 / DSM 2661 / JAL-1 / JCM 10045 / NBRC 100440) (Methanococcus jannaschii).